The primary structure comprises 516 residues: Probable cyclic di-GMP phosphodiesterase PdeB (516 aa).

Helical transmembrane passes span 6-26 and 242-262; these read LVGL…GLSI and QVFI…MFVL. Residues 268-516 form the EAL domain; sequence IQSPHHRLQD…DFLRWAEQHL (249 aa).

The protein resides in the cell inner membrane. It catalyses the reaction 3',3'-c-di-GMP + H2O = 5'-phosphoguanylyl(3'-&gt;5')guanosine + H(+). Phosphodiesterase (PDE) that catalyzes the hydrolysis of cyclic-di-GMP (c-di-GMP) to 5'-pGpG. The protein is Probable cyclic di-GMP phosphodiesterase PdeB of Escherichia coli (strain K12).